Reading from the N-terminus, the 398-residue chain is MPTTPTRAPSLLQAFLRSEALGGYVLMIAAVLALIVANSPLAPAYFQLLGTKLGYASEAFTLKESVLHWINDGLMAVFFLLVGLEIKREMLDGQLRGVSRIVLPGVAAAGGMLMPALVYLLVNQGDPAGLRGWAIPAATDIAFALGILALLGSRVPTSLKIFLTALAILDDLGAIAIIAVFYTAELNTSALAAAGGLLAALCVLNRLRVLRLAPYLLVGALLWYFVLKSGVHATLAGVALALAIPLRRQDPRQPGAEHSPLHALEHALHRPVALLIVPVFGFANAGVSFDGMGIDSLTAPIPLGIALGLFLGKQLGVFGFAWLAIRTGLASMPRHASFAQLYGVALLCGIGFTMSLFIGALAFDDAATIDATKIGVLTGSLVSAVLGYALLRVLPPAD.

11 consecutive transmembrane segments (helical) span residues 21 to 41 (LGGY…NSPL), 66 to 86 (VLHW…GLEI), 101 to 121 (IVLP…VYLL), 132 to 152 (GWAI…ALLG), 161 to 181 (IFLT…IAVF), 184 to 204 (AELN…LCVL), 216 to 236 (LLVG…ATLA), 274 to 294 (LLIV…GMGI), 305 to 325 (IALG…WLAI), 343 to 363 (GVAL…ALAF), and 374 to 394 (IGVL…LRVL).

Belongs to the NhaA Na(+)/H(+) (TC 2.A.33) antiporter family.

It is found in the cell inner membrane. It carries out the reaction Na(+)(in) + 2 H(+)(out) = Na(+)(out) + 2 H(+)(in). Its function is as follows. Na(+)/H(+) antiporter that extrudes sodium in exchange for external protons. The polypeptide is Na(+)/H(+) antiporter NhaA (Bordetella bronchiseptica (strain ATCC BAA-588 / NCTC 13252 / RB50) (Alcaligenes bronchisepticus)).